The primary structure comprises 511 residues: Probable cytosol aminopeptidase (511 aa).

Lys-255 and Asp-260 together coordinate Mn(2+). Residue Lys-267 is part of the active site. The Mn(2+) site is built by Asp-278, Asp-337, and Glu-339. Residue Arg-341 is part of the active site. The tract at residues 485–511 (GAAQAVSPKKAARKEPGAAARKARSAQ) is disordered.

It belongs to the peptidase M17 family. Mn(2+) serves as cofactor.

It is found in the cytoplasm. It catalyses the reaction Release of an N-terminal amino acid, Xaa-|-Yaa-, in which Xaa is preferably Leu, but may be other amino acids including Pro although not Arg or Lys, and Yaa may be Pro. Amino acid amides and methyl esters are also readily hydrolyzed, but rates on arylamides are exceedingly low.. The catalysed reaction is Release of an N-terminal amino acid, preferentially leucine, but not glutamic or aspartic acids.. Functionally, presumably involved in the processing and regular turnover of intracellular proteins. Catalyzes the removal of unsubstituted N-terminal amino acids from various peptides. The polypeptide is Probable cytosol aminopeptidase (Variovorax paradoxus (strain S110)).